Reading from the N-terminus, the 274-residue chain is MQKIIKLKDLKIGNDLPFTLIAGPCQIEGLDHALFMAEELVKLTTRLNIPFIYKSSFDKANRTSVNGARGLGIDKGLEVLAEVKRAFNCPIVTDVHSENQCAEVAKIVDMLQIPAFLCRQTDLLQAAAATGKIVNVKKGQFLAPWDMKNVHKKLESFGAKDILLTERGTCFGYNNLVSDMRGLAIMAELNTPVIFDATHSVQQPGGLGGSTGGERKYVELLAKAAVAVGVAGLYMEVHQDPDNAPSDGPCMIRLDNLERVLTKLKKYDEITKEK.

This sequence belongs to the KdsA family.

The protein resides in the cytoplasm. It carries out the reaction D-arabinose 5-phosphate + phosphoenolpyruvate + H2O = 3-deoxy-alpha-D-manno-2-octulosonate-8-phosphate + phosphate. It participates in carbohydrate biosynthesis; 3-deoxy-D-manno-octulosonate biosynthesis; 3-deoxy-D-manno-octulosonate from D-ribulose 5-phosphate: step 2/3. Its pathway is bacterial outer membrane biogenesis; lipopolysaccharide biosynthesis. The polypeptide is 2-dehydro-3-deoxyphosphooctonate aldolase (Rickettsia bellii (strain OSU 85-389)).